The following is a 454-amino-acid chain: Histidine--tRNA ligase (454 aa).

This sequence belongs to the class-II aminoacyl-tRNA synthetase family. In terms of assembly, homodimer.

Its subcellular location is the cytoplasm. The enzyme catalyses tRNA(His) + L-histidine + ATP = L-histidyl-tRNA(His) + AMP + diphosphate + H(+). This Bacteroides fragilis (strain ATCC 25285 / DSM 2151 / CCUG 4856 / JCM 11019 / LMG 10263 / NCTC 9343 / Onslow / VPI 2553 / EN-2) protein is Histidine--tRNA ligase.